Consider the following 142-residue polypeptide: MSLTKTERTIIVSMWAKISTQADTIGTETLERLFLSHPQTKTYFPHFDLHPGSAQLRAHGSKVVAAVGDAVKSIDDIGGALSKLSELHAYILRVDPVNFKLLSHCLLVTLAARFPADFTAEAHAAWDKFLSVVSSVLTEKYR.

N-acetylserine is present on S2. Residues 2–142 (SLTKTERTII…VSSVLTEKYR (141 aa)) enclose the Globin domain. Phosphothreonine is present on T29. Position 53 is a phosphoserine (S53). Residue H59 coordinates heme b. Phosphoserine occurs at positions 73 and 82. H88 contributes to the heme b binding site.

It belongs to the globin family. As to quaternary structure, heterotetramer of two zeta chains and two epsilon chains in early embryonic hemoglobin Gower-1; two zeta chains and two gamma chains in fetal hemoglobin Portland-1. Heterotetramer of two zeta chains and two beta chains in hemoglobin Portland-2, detected in fetuses and neonates with homozygous alpha-thalassemia. As to expression, detected in fetal erythrocytes (at protein level).

The zeta chain is an alpha-type chain of mammalian embryonic hemoglobin. The protein is Hemoglobin subunit zeta (HBZ) of Homo sapiens (Human).